Here is a 343-residue protein sequence, read N- to C-terminus: Phosphatidylglycerol--prolipoprotein diacylglyceryl transferase 1 (343 aa).

The next 4 helical transmembrane spans lie at Val19 to Gly39, Ala54 to Ile74, Ile93 to Ile113, and Gly119 to Ile139. Arg141 is an a 1,2-diacyl-sn-glycero-3-phospho-(1'-sn-glycerol) binding site. The next 3 membrane-spanning stretches (helical) occupy residues His176–Ala196, Leu202–Tyr224, and Leu238–Ala258. Residues Glu269–Gly343 form a disordered region. The span at Ala283–Ala293 shows a compositional bias: basic and acidic residues. Over residues Ala314 to Ala324 the composition is skewed to acidic residues.

This sequence belongs to the Lgt family.

The protein resides in the cell membrane. It carries out the reaction L-cysteinyl-[prolipoprotein] + a 1,2-diacyl-sn-glycero-3-phospho-(1'-sn-glycerol) = an S-1,2-diacyl-sn-glyceryl-L-cysteinyl-[prolipoprotein] + sn-glycerol 1-phosphate + H(+). Its pathway is protein modification; lipoprotein biosynthesis (diacylglyceryl transfer). Its function is as follows. Catalyzes the transfer of the diacylglyceryl group from phosphatidylglycerol to the sulfhydryl group of the N-terminal cysteine of a prolipoprotein, the first step in the formation of mature lipoproteins. The protein is Phosphatidylglycerol--prolipoprotein diacylglyceryl transferase 1 of Streptomyces coelicolor (strain ATCC BAA-471 / A3(2) / M145).